Consider the following 409-residue polypeptide: NDP-glycosyltransferase ltbB (409 aa).

A glycan (N-linked (GlcNAc...) asparagine) is linked at Asn36. The helical transmembrane segment at 319–339 (IWAFAYVWAWLQTLYTAPWIA) threads the bilayer.

This sequence belongs to the GT2 glycosyltransferase family.

It localises to the membrane. Its pathway is secondary metabolite biosynthesis. In terms of biological role, NDP-glycosyltransferase; part of the gene cluster that mediates the biosynthesis of luteodienoside A, a glycosylated polyketide consisting of an unusual 1-O-beta-D-glucopyranosyl-myo-inositol (glucinol) ester of 3-hydroxy-2,2,4-trimethylocta-4,6-dienoic acid. LtbB likely serves as a glucinol synthase by transferring D-glucose to myo-inositol using NDP-glucose as a substrate. The ltbA carnitine O-acyltransferase (cAT) domain uses glucinol produced by the glycosyltransferase ltbB as an offloading substrate to release luteodienoside A from the HR-PKS. Since ltbA and ltbB are sufficient for the biosynthesis of luteodienoside A, the functions of the methyltransferase ltbC and the FAD-binding monooxygenase ltbD within the pathway remain obscur. This chain is NDP-glycosyltransferase ltbB, found in Aspergillus luteorubrus.